Consider the following 722-residue polypeptide: uncharacterized protein (722 aa).

Catalysis depends on charge relay system residues Ser575, Asp658, and His691.

This sequence belongs to the peptidase S9B family.

This is an uncharacterized protein from Rickettsia prowazekii (strain Madrid E).